The chain runs to 342 residues: Galactose mutarotase (342 aa).

Ser-14 is modified (phosphoserine). Residues 81-82 (NR) and His-107 contribute to the beta-D-galactose site. Ser-124 is modified (phosphoserine). His-176 serves as the catalytic Proton donor. Beta-D-galactose contacts are provided by residues 176–178 (HSY), Asp-243, Gln-279, and Glu-307. Glu-307 (proton acceptor) is an active-site residue.

It belongs to the aldose epimerase family. Monomer.

It is found in the cytoplasm. The enzyme catalyses alpha-D-galactose = beta-D-galactose. The catalysed reaction is alpha-D-glucose = beta-D-glucose. It functions in the pathway carbohydrate metabolism; hexose metabolism. It participates in carbohydrate metabolism; galactose metabolism. Its function is as follows. Mutarotase that catalyzes the interconversion of beta-D-galactose and alpha-D-galactose during galactose metabolism. Beta-D-galactose is metabolized in the liver into glucose 1-phosphate, the primary metabolic fuel, by the action of four enzymes that constitute the Leloir pathway: GALM, GALK1 (galactokinase), GALT (galactose-1-phosphate uridylyltransferase) and GALE (UDP-galactose-4'-epimerase). Involved in the maintenance of the equilibrium between the beta- and alpha-anomers of galactose, therefore ensuring a sufficient supply of the alpha-anomer for GALK1. Also active on D-glucose although shows a preference for galactose over glucose. In Sus scrofa (Pig), this protein is Galactose mutarotase (GALM).